The sequence spans 190 residues: Fe/S biogenesis protein NfuA (190 aa).

[4Fe-4S] cluster is bound by residues C148 and C151.

This sequence belongs to the NfuA family. As to quaternary structure, homodimer. [4Fe-4S] cluster is required as a cofactor.

Its function is as follows. Involved in iron-sulfur cluster biogenesis. Binds a 4Fe-4S cluster, can transfer this cluster to apoproteins, and thereby intervenes in the maturation of Fe/S proteins. Could also act as a scaffold/chaperone for damaged Fe/S proteins. The chain is Fe/S biogenesis protein NfuA from Baumannia cicadellinicola subsp. Homalodisca coagulata.